A 177-amino-acid chain; its full sequence is Putative membrane protein 165 (177 aa).

Residues 1-7 (MYLVLLI) lie on the Intravirion side of the membrane. The helical transmembrane segment at 8–24 (AVILFIIVILMIFLISG) threads the bilayer. The Virion surface segment spans residues 25 to 166 (LFYPEQEPAL…DPHPALKSKN (142 aa)).

The protein belongs to the asfivirus envelope protein p22 family.

It is found in the virion membrane. The protein localises to the host cell membrane. This is Putative membrane protein 165 from African swine fever virus (isolate Pig/Kenya/KEN-50/1950) (ASFV).